The sequence spans 257 residues: Global transcriptional regulator CodY (257 aa).

The segment at 1–155 is GAF domain; sequence MSLLSKTREL…AATVIGMEIL (155 aa). A DNA-binding region (H-T-H motif) is located at residues 203–222; sequence ASKVADGVGITRSVIVNALR.

Belongs to the CodY family.

It localises to the cytoplasm. DNA-binding global transcriptional regulator which is involved in the adaptive response to starvation and acts by directly or indirectly controlling the expression of numerous genes in response to nutrient availability. During rapid exponential growth, CodY is highly active and represses genes whose products allow adaptation to nutrient depletion. This chain is Global transcriptional regulator CodY, found in Staphylococcus aureus (strain bovine RF122 / ET3-1).